A 265-amino-acid chain; its full sequence is Shikimate dehydrogenase (NADP(+)) (265 aa).

Shikimate is bound by residues 15-17 (SKS) and T62. K66 acts as the Proton acceptor in catalysis. Shikimate-binding residues include N87 and D102. NADP(+)-binding positions include 127–131 (GAGGA), 151–156 (NRTVSR), and M212. Y214 provides a ligand contact to shikimate. G234 lines the NADP(+) pocket.

This sequence belongs to the shikimate dehydrogenase family. As to quaternary structure, homodimer.

It catalyses the reaction shikimate + NADP(+) = 3-dehydroshikimate + NADPH + H(+). Its pathway is metabolic intermediate biosynthesis; chorismate biosynthesis; chorismate from D-erythrose 4-phosphate and phosphoenolpyruvate: step 4/7. Functionally, involved in the biosynthesis of the chorismate, which leads to the biosynthesis of aromatic amino acids. Catalyzes the reversible NADPH linked reduction of 3-dehydroshikimate (DHSA) to yield shikimate (SA). The chain is Shikimate dehydrogenase (NADP(+)) from Thiobacillus denitrificans (strain ATCC 25259 / T1).